The sequence spans 854 residues: Fibroblast growth factor receptor 1 (854 aa).

A signal peptide spans 1–20 (MSGLFFLLSELLILLGKINS). The Extracellular segment spans residues 21-383 (VSKKSLCHPE…NFFMNSVPLS (363 aa)). The region spanning 29 to 120 (PELFKIDNKL…SSVFFLINVT (92 aa)) is the Ig-like C2-type 1 domain. A disulfide bridge connects residues Cys-50 and Cys-102. Residues Asn-95, Asn-99, Asn-110, Asn-118, Asn-140, Asn-175, Asn-202, Asn-248, Asn-283, Asn-317, and Asn-346 are each glycosylated (N-linked (GlcNAc...) asparagine). Ig-like C2-type domains follow at residues 147-259 (PEMG…FTFT) and 268-369 (PHLT…LSVI). Residues Cys-166 and Cys-242 are joined by a disulfide bond. Cys-288 and Cys-353 are joined by a disulfide. A helical membrane pass occupies residues 384–404 (IFLVIGFFVAIILLSLIIYCF). At 405 to 854 (FLQYKNAVDS…SDYLEPKCLV (450 aa)) the chain is on the cytoplasmic side. One can recognise a Protein kinase domain in the interval 551–822 (KITNKKLGEG…EIVEILIDII (272 aa)). Residues 557 to 565 (LGEGAFGMV) and Lys-585 contribute to the ATP site. Asp-689 (proton acceptor) is an active-site residue. Residue Tyr-718 is modified to Phosphotyrosine; by autocatalysis.

Belongs to the protein kinase superfamily. Tyr protein kinase family. Fibroblast growth factor receptor subfamily. In terms of tissue distribution, expressed in brain, stem cells and the mesenchymal cells.

It is found in the membrane. It catalyses the reaction L-tyrosyl-[protein] + ATP = O-phospho-L-tyrosyl-[protein] + ADP + H(+). In terms of biological role, receptor for basic fibroblast growth factor. This chain is Fibroblast growth factor receptor 1 (FGFR1), found in Dugesia japonica (Planarian).